We begin with the raw amino-acid sequence, 117 residues long: Large ribosomal subunit protein bL19 (117 aa).

The protein belongs to the bacterial ribosomal protein bL19 family.

Its function is as follows. This protein is located at the 30S-50S ribosomal subunit interface and may play a role in the structure and function of the aminoacyl-tRNA binding site. The protein is Large ribosomal subunit protein bL19 of Micrococcus luteus (strain ATCC 4698 / DSM 20030 / JCM 1464 / CCM 169 / CCUG 5858 / IAM 1056 / NBRC 3333 / NCIMB 9278 / NCTC 2665 / VKM Ac-2230) (Micrococcus lysodeikticus).